A 121-amino-acid polypeptide reads, in one-letter code: Small ribosomal subunit protein uS13 (121 aa).

Residues 91–121 (HRRGLPVRGQNTKNNARTRKGPSKTVAGKKK) are disordered. The span at 106–121 (ARTRKGPSKTVAGKKK) shows a compositional bias: basic residues.

This sequence belongs to the universal ribosomal protein uS13 family. As to quaternary structure, part of the 30S ribosomal subunit. Forms a loose heterodimer with protein S19. Forms two bridges to the 50S subunit in the 70S ribosome.

Its function is as follows. Located at the top of the head of the 30S subunit, it contacts several helices of the 16S rRNA. In the 70S ribosome it contacts the 23S rRNA (bridge B1a) and protein L5 of the 50S subunit (bridge B1b), connecting the 2 subunits; these bridges are implicated in subunit movement. Contacts the tRNAs in the A and P-sites. This is Small ribosomal subunit protein uS13 from Listeria monocytogenes serotype 4b (strain CLIP80459).